We begin with the raw amino-acid sequence, 335 residues long: Trans-1,2-dihydrobenzene-1,2-diol dehydrogenase (335 aa).

This sequence belongs to the Gfo/Idh/MocA family. As to quaternary structure, homodimer.

The enzyme catalyses (1R,2R)-1,2-dihydrobenzene-1,2-diol + NADP(+) = catechol + NADPH + H(+). It catalyses the reaction D-xylose + NADP(+) = D-xylono-1,5-lactone + NADPH + H(+). The polypeptide is Trans-1,2-dihydrobenzene-1,2-diol dehydrogenase (DHDH) (Bos taurus (Bovine)).